Reading from the N-terminus, the 1437-residue chain is CRISPR-associated endoribonuclease Cas13a (1437 aa).

2 HEPN-like fold regions span residues 460–626 (LNAS…AMFE) and 1101–1437 (EFRD…QLKN). Positions 1377-1419 (EVKEKKKPSDNNTGKGYSKRDRQQDRKEYDKYKEKKKKEGNFL) are disordered. The segment covering 1394-1416 (SKRDRQQDRKEYDKYKEKKKKEG) has biased composition (basic and acidic residues).

This sequence belongs to the CRISPR-associated endoribonuclease Cas13a family. Requires a divalent metal cation as cofactor.

With respect to regulation, target RNA acts as an activator for non-specific ssRNA degradation. Functionally, CRISPR (clustered regularly interspaced short palindromic repeat), is an adaptive immune system that provides protection against mobile genetic elements (viruses, transposable elements and conjugative plasmids). CRISPR clusters contain sequences complementary to antecedent mobile elements and target invading nucleic acids. Unlike many single-component effectors, this CRISPR-Cas system targets RNA. CRISPR clusters are transcribed from pre-CRISPR RNA (crRNA) and processed into crRNA by this protein. Cleaves linear target ssRNA in a pre-crRNA-dependent fashion, preferentially around A residues. Binding a viable target RNA target activates this protein for non-specific RNA degradation in vitro (called collateral RNA degradation), but it is not very sensitive as it requires nanomolar levels of viable target RNA. The chain is CRISPR-associated endoribonuclease Cas13a from Lachnospiraceae bacterium (strain NK4A179).